Reading from the N-terminus, the 796-residue chain is MAPSNGPRSGKNAKSSHTLKRKRAQDDLSTLTQRVEDLDIKETYKSFSDLPLSEPTASGLASSHFKTLTDIQSRAIGHALKGRDILGAAKTGSGKTLAFLIPVLENLYRKQWSEHDGLGALILSPTRELAIQIFEVLRKIGRYHTFSAGLIIGGKSLKEEQERLGRMNILVCTPGRMLQHLDQTAMFDVFNLQMLVLDEADRILDMGFQKTVDAIVGHLPKERQTLLFSATQTKKVSDLARLSLQDPEYVAVHETASSATPSTLQQHYVVTPLSQKLDVLWSFIRSNLKAKTIVFLSSGKQVRFVYESFRHLQPGIPLMHLHGRQKQGGRLDITAKFSQAKHAVLFSTDITARGLDFPAVDWVIQMDCPEDADTYIHRVGRTARYERDGRAVLFLDPSEESGMLKRLEQKKVPIERINIKANKQQSIRDQLQNMCFKDPELKYLGQKAFISYVKSVYVQKDKEVFKLKELKLEDFASSLGLPGAPRIKFIKGDDTKERKNASRATAYLSSDDDSDEGGEKKSKKDEKQVRTKYDRMFERRNQDVLADHYSKLINDDGTLVDPSKTASAADDADEDDDFLSVKRRFDAGDEDLGGNSEEELEQKGVKVVQLDGKDTLVIDSKRREKLLKSKKKLLKFKGKGTKLIYDDEGNAHELYEMEDEEDFKARGDAKEQQARFLAEETERTRTADMEDKEVAKQKRREKKEKRKARERELLAEEEAEEAVAQLAPYKEDDEFSASDREDDAPRPSKKQKVRIAEPEESKEEPWYKKSKKPAAKAPEQIQTLEDLESLATGLLG.

The tract at residues 1 to 28 (MAPSNGPRSGKNAKSSHTLKRKRAQDDL) is disordered. The Q motif motif lies at 45 to 73 (KSFSDLPLSEPTASGLASSHFKTLTDIQS). In terms of domain architecture, Helicase ATP-binding spans 76-250 (IGHALKGRDI…RLSLQDPEYV (175 aa)). 89 to 96 (AKTGSGKT) lines the ATP pocket. The DEAD box motif lies at 198–201 (DEAD). The 164-residue stretch at 272 to 435 (PLSQKLDVLW…SIRDQLQNMC (164 aa)) folds into the Helicase C-terminal domain. Disordered stretches follow at residues 500 to 533 (NASR…RTKY), 556 to 575 (DGTL…ADED), and 662 to 796 (DFKA…GLLG). Positions 517–533 (GGEKKSKKDEKQVRTKY) are enriched in basic and acidic residues. A compositionally biased stretch (basic and acidic residues) spans 663–696 (FKARGDAKEQQARFLAEETERTRTADMEDKEVAK). Residues 697–706 (QKRREKKEKR) are compositionally biased toward basic residues. 2 stretches are compositionally biased toward basic and acidic residues: residues 737 to 746 (ASDREDDAPR) and 754 to 767 (RIAE…EPWY).

The protein belongs to the DEAD box helicase family. DDX10/DBP4 subfamily. Interacts with the U3 and U14 snoRNAs. Associates with pre-ribosomal complexes.

It localises to the nucleus. The protein resides in the nucleolus. It carries out the reaction ATP + H2O = ADP + phosphate + H(+). ATP-dependent RNA helicase required for ribosome biogenesis. Involved in the release of U14 snoRNA in pre-ribosomal complexes. Required for pre-rRNA cleavage at site A2. The sequence is that of ATP-dependent RNA helicase dbp4 (dbp4) from Aspergillus oryzae (strain ATCC 42149 / RIB 40) (Yellow koji mold).